We begin with the raw amino-acid sequence, 129 residues long: Ig kappa chain V-IV region S107B (129 aa).

The N-terminal stretch at 1–22 (MDLQVQIIXFLLISVTVIMSRG) is a signal peptide. Residues 23–45 (ENVLTQSPAIMAASLGQKVTMTC) are framework-1. Cys-45 and Cys-111 are disulfide-bonded. Positions 46–57 (SASSSVSSSYLH) are complementarity-determining-1. The segment at 58-72 (WYQQKSGASPKPLIH) is framework-2. The interval 73–79 (RTSNLAS) is complementarity-determining-2. The interval 80 to 111 (GVPARFSGSGSGTSYSLTISSVEAEDDATYYC) is framework-3. Residues 112-118 (QQWSGYP) are complementarity-determining-3. The interval 119–128 (FGSGTKLEIK) is framework-4.

The protein is Ig kappa chain V-IV region S107B of Mus musculus (Mouse).